The sequence spans 72 residues: Holocyclotoxin-1 (72 aa).

Residues 1 to 22 form the signal peptide; the sequence is MSKVTTVFIGALVLLLLIENGF. Cystine bridges form between Cys-24-Cys-40, Cys-32-Cys-57, Cys-36-Cys-60, and Cys-42-Cys-70.

In terms of tissue distribution, expressed in salivary glands.

It is found in the secreted. Its function is as follows. Probable neurotoxin. The polypeptide is Holocyclotoxin-1 (Ixodes holocyclus (Australian paralysis tick)).